The primary structure comprises 95 residues: uncharacterized protein (95 aa).

This is an uncharacterized protein from Archaeoglobus fulgidus (strain ATCC 49558 / DSM 4304 / JCM 9628 / NBRC 100126 / VC-16).